The following is a 309-amino-acid chain: Peptide methionine sulfoxide reductase MsrA/MsrB (309 aa).

The peptide methionine sulfoxide reductase A stretch occupies residues 1-153 (MIYLAGGCFW…PNGYCHIDIN (153 aa)). The active site involves cysteine 8. A MsrB domain is found at 170 to 293 (ATEIKEKLSA…NSLSITFIPK (124 aa)). Cysteine 282 acts as the Nucleophile in catalysis.

The protein in the N-terminal section; belongs to the MsrA Met sulfoxide reductase family. This sequence in the C-terminal section; belongs to the MsrB Met sulfoxide reductase family.

It catalyses the reaction L-methionyl-[protein] + [thioredoxin]-disulfide + H2O = L-methionyl-(S)-S-oxide-[protein] + [thioredoxin]-dithiol. The catalysed reaction is [thioredoxin]-disulfide + L-methionine + H2O = L-methionine (S)-S-oxide + [thioredoxin]-dithiol. The enzyme catalyses L-methionyl-[protein] + [thioredoxin]-disulfide + H2O = L-methionyl-(R)-S-oxide-[protein] + [thioredoxin]-dithiol. Functionally, has an important function as a repair enzyme for proteins that have been inactivated by oxidation. Catalyzes the reversible oxidation-reduction of methionine sulfoxide in proteins to methionine. This chain is Peptide methionine sulfoxide reductase MsrA/MsrB (msrAB), found in Streptococcus pyogenes serotype M1.